The sequence spans 155 residues: Small ribosomal subunit protein uS7cz/uS7cy (155 aa).

This sequence belongs to the universal ribosomal protein uS7 family. Part of the 30S ribosomal subunit.

The protein localises to the plastid. Its subcellular location is the chloroplast. Functionally, one of the primary rRNA binding proteins, it binds directly to 16S rRNA where it nucleates assembly of the head domain of the 30S subunit. This is Small ribosomal subunit protein uS7cz/uS7cy (rps7-A) from Chloranthus spicatus (Chulantree).